The primary structure comprises 246 residues: Adenosine 5'-phosphosulfate reductase (246 aa).

The [4Fe-4S] cluster site is built by Cys-131, Cys-132, Cys-214, and Cys-217. The Nucleophile; cysteine thiosulfonate intermediate role is filled by Cys-242.

Belongs to the PAPS reductase family. CysH subfamily. [4Fe-4S] cluster serves as cofactor.

The protein resides in the cytoplasm. The catalysed reaction is [thioredoxin]-disulfide + sulfite + AMP + 2 H(+) = adenosine 5'-phosphosulfate + [thioredoxin]-dithiol. The protein operates within sulfur metabolism; hydrogen sulfide biosynthesis; sulfite from sulfate. Functionally, catalyzes the formation of sulfite from adenosine 5'-phosphosulfate (APS) using thioredoxin as an electron donor. The sequence is that of Adenosine 5'-phosphosulfate reductase from Neisseria meningitidis serogroup B (strain ATCC BAA-335 / MC58).